The primary structure comprises 597 residues: Elongation factor 4 (597 aa).

Residues 2–184 (DHIRNFSIIA…ALIAKVPPPK (183 aa)) enclose the tr-type G domain. Residues 14–19 (DHGKST) and 131–134 (NKID) each bind GTP.

Belongs to the TRAFAC class translation factor GTPase superfamily. Classic translation factor GTPase family. LepA subfamily.

Its subcellular location is the cell inner membrane. The enzyme catalyses GTP + H2O = GDP + phosphate + H(+). In terms of biological role, required for accurate and efficient protein synthesis under certain stress conditions. May act as a fidelity factor of the translation reaction, by catalyzing a one-codon backward translocation of tRNAs on improperly translocated ribosomes. Back-translocation proceeds from a post-translocation (POST) complex to a pre-translocation (PRE) complex, thus giving elongation factor G a second chance to translocate the tRNAs correctly. Binds to ribosomes in a GTP-dependent manner. This chain is Elongation factor 4, found in Burkholderia multivorans (strain ATCC 17616 / 249).